The sequence spans 955 residues: Vacuolar membrane protease (955 aa).

At 1 to 16 (MASLRLPRANPLAFTR) the chain is on the cytoplasmic side. A helical transmembrane segment spans residues 17 to 37 (WPVTVITAIVYLALLIPLLVV). Residues 38 to 390 (HHVVPSAPSS…STFVLFQLHT (353 aa)) lie on the Vacuolar side of the membrane. Asparagine 53 and asparagine 119 each carry an N-linked (GlcNAc...) asparagine glycan. Positions 174 and 186 each coordinate Zn(2+). The active-site Proton acceptor is the glutamate 220. 3 residues coordinate Zn(2+): glutamate 221, glutamate 246, and histidine 319. A helical membrane pass occupies residues 391-411 (LFALLVTLLIVGPLTLLFTSI). At 412 to 442 (ALTKADKMYLFRSSAKSEDRLDVVPLQGLRG) the chain is on the cytoplasmic side. The helical transmembrane segment at 443–463 (FFRFPFLFGIPTVVTVGLAYL) threads the bilayer. Residues 464-473 (VTKVNPYIIH) are Vacuolar-facing. The helical transmembrane segment at 474–494 (SSAYAVWSMMVAAWVFLAWFV) threads the bilayer. Residues 495-508 (SRVADFARPSAFHR) lie on the Cytoplasmic side of the membrane. Residues 509 to 529 (IYTLTWMYVLSWVSAVIATVY) form a helical membrane-spanning segment. Residues 530–533 (ANQR) lie on the Vacuolar side of the membrane. A helical transmembrane segment spans residues 534–554 (GLAGGYFIFFFHAGIFLAKWI). Over 555–656 (SYLELFALPS…WSYALPKWTW (102 aa)) the chain is Cytoplasmic. Residues 574 to 590 (SASGRASGHGSRRGTTS) show a composition bias toward low complexity. The segment at 574–611 (SASGRASGHGSRRGTTSGEDDGEEAEEEPTESTSLLGS) is disordered. Residues 591-603 (GEDDGEEAEEEPT) show a composition bias toward acidic residues. Residues 657–677 (VLQLLLTAPITLIMVGPLALL) form a helical membrane-spanning segment. The Vacuolar portion of the chain corresponds to 678 to 693 (TISAISQTGQDGGHPL). Residues 694–714 (FAYVAIAIFTTIMLTPLLPFI) form a helical membrane-spanning segment. Residues 715–721 (HRYTYHV) are Cytoplasmic-facing. A helical transmembrane segment spans residues 722 to 742 (PLFLLAVFLGTLIYNLVAFPF). Over 743-955 (SDSNRLKLYY…RRAFEIGNDD (213 aa)) the chain is Vacuolar. An N-linked (GlcNAc...) asparagine glycan is attached at asparagine 826.

This sequence belongs to the peptidase M28 family. Requires Zn(2+) as cofactor.

Its subcellular location is the vacuole membrane. Its function is as follows. May be involved in vacuolar sorting and osmoregulation. In Aspergillus oryzae (strain ATCC 42149 / RIB 40) (Yellow koji mold), this protein is Vacuolar membrane protease.